The primary structure comprises 189 residues: Small ribosomal subunit protein uS5 (189 aa).

Residues 22–85 (FVDKLVAINR…ESAKRDLIFV (64 aa)) form the S5 DRBM domain.

This sequence belongs to the universal ribosomal protein uS5 family. As to quaternary structure, part of the 30S ribosomal subunit. Contacts proteins S4 and S8.

Functionally, with S4 and S12 plays an important role in translational accuracy. Its function is as follows. Located at the back of the 30S subunit body where it stabilizes the conformation of the head with respect to the body. The protein is Small ribosomal subunit protein uS5 of Agrobacterium fabrum (strain C58 / ATCC 33970) (Agrobacterium tumefaciens (strain C58)).